A 357-amino-acid polypeptide reads, in one-letter code: Retinoic acid-induced protein 3 (357 aa).

Over 1-33 (MATTVPDGCRNGLKSKYYRLCDKAEAWGIVLET) the chain is Extracellular. The chain crosses the membrane as a helical span at residues 34-54 (VATAGVVTSVAFMLTLPILVC). Residues 55–68 (KVQDSNRRKMLPTQ) are Cytoplasmic-facing. The helical transmembrane segment at 69-89 (FLFLLGVLGIFGLTFAFIIGL) threads the bilayer. Residues 90-97 (DGSTGPTR) lie on the Extracellular side of the membrane. The helical transmembrane segment at 98 to 118 (FFLFGILFSICFSCLLAHAVS) threads the bilayer. The Cytoplasmic segment spans residues 119–129 (LTKLVRGRKPL). A helical transmembrane segment spans residues 130-150 (SLLVILGLAVGFSLVQDVIAI). At 151 to 176 (EYIVLTMNRTNVNVFSELSAPRRNED) the chain is on the extracellular side. N158 is a glycosylation site (N-linked (GlcNAc...) asparagine). The chain crosses the membrane as a helical span at residues 177–197 (FVLLLTYVLFLMALTFLMSSF). Residues 198–212 (TFCGSFTGWKRHGAH) are Cytoplasmic-facing. A helical membrane pass occupies residues 213–233 (IYLTMLLSIAIWVAWITLLML). The Extracellular segment spans residues 234-247 (PDFDRRWDDTILSS). Residues 248–268 (ALAANGWVFLLAYVSPEFWLL) traverse the membrane as a helical segment. The Cytoplasmic portion of the chain corresponds to 269–357 (TKQRNPMDYP…KDYEVKKEGS (89 aa)). Position 301 is a phosphoserine (S301). A phosphotyrosine mark is found at Y317 and Y320. At S345 the chain carries Phosphoserine. Y347 and Y350 each carry phosphotyrosine.

This sequence belongs to the G-protein coupled receptor 3 family. As to quaternary structure, interacts (via its transmembrane domain) with EGFR. Post-translationally, phosphorylated in two conserved double-tyrosine motifs, Tyr-317/Tyr-320 and Tyr-347/Tyr-350, by EGFR; leading to inactivation of the tumor suppressive function of GPRC5A in lung cancer cells. Tyr-317 and Tyr-320 are the preferred residues responsible for EGFR-mediated GPRC5A phosphorylation. In terms of tissue distribution, expressed at high level in fetal and adult lung tissues but repressed in most human lung cancers. Constitutively expressed in fetal kidney and adult placenta, kidney, prostate, testis, ovary, small intestine, colon, stomach, and spinal cord at low to moderate levels. Not detectable in fetal heart, brain, and liver and adult heart, brain, liver, skeletal muscle, pancreas, spleen, thymus, and peripheral leukocytes. According to PubMed:10783259, expressed at low but detectable level in pancreas and heart.

It localises to the cell membrane. The protein resides in the cytoplasmic vesicle membrane. Functionally, orphan receptor. Could be involved in modulating differentiation and maintaining homeostasis of epithelial cells. This retinoic acid-inducible GPCR provide evidence for a possible interaction between retinoid and G-protein signaling pathways. Functions as a negative modulator of EGFR signaling. May act as a lung tumor suppressor. The sequence is that of Retinoic acid-induced protein 3 (GPRC5A) from Homo sapiens (Human).